Consider the following 687-residue polypeptide: Guanine-nucleotide exchange factor YEL1 (687 aa).

In terms of domain architecture, SEC7 spans 57 to 264; sequence ILQNKEAAND…SEYYKTLNET (208 aa). The tract at residues 63–97 is disordered; that stretch reads AANDEKPVIPTTDTATAGTGTEDISSTQSEETDQN. A compositionally biased stretch (low complexity) spans 73-83; the sequence is TTDTATAGTGT. Thr290 carries the phosphothreonine modification. 2 positions are modified to phosphoserine: Ser293 and Ser299. A PH domain is found at 412 to 551; the sequence is TSRRTSLSYL…DCINFWAGRI (140 aa).

It belongs to the YEL1 family.

It localises to the cytoplasm. Its subcellular location is the cell membrane. It is found in the bud neck. The protein resides in the bud tip. In terms of biological role, guanine nucleotide exchange factor for ARF3 required for localization of ARF3 to the bud neck and tip and involved in actin patch polarization. This chain is Guanine-nucleotide exchange factor YEL1 (YEL1), found in Saccharomyces cerevisiae (strain JAY291) (Baker's yeast).